The sequence spans 301 residues: L-threonate dehydrogenase (301 aa).

Residues 6 to 34 (YSVA…TYGI) and Thr-101 each bind NAD(+). The active site involves Lys-177. Residue Lys-245 participates in NAD(+) binding.

It belongs to the HIBADH-related family. L-threonate dehydrogenase subfamily.

It carries out the reaction L-threonate + NAD(+) = 2-dehydro-L-erythronate + NADH + H(+). Its function is as follows. Catalyzes oxidation of L-threonate to 2-oxo-tetronate. Can use either NAD(+) or NADP(+) as cosubstrate, with a preference for NAD(+). The protein is L-threonate dehydrogenase of Haemophilus influenzae (strain ATCC 51907 / DSM 11121 / KW20 / Rd).